Consider the following 189-residue polypeptide: dCTP deaminase (189 aa).

DCTP contacts are provided by residues 112 to 117 (KSTYAR), 136 to 138 (TLE), glutamine 157, tyrosine 171, and glutamine 181. The active-site Proton donor/acceptor is the glutamate 138.

Belongs to the dCTP deaminase family. As to quaternary structure, homotrimer.

The enzyme catalyses dCTP + H2O + H(+) = dUTP + NH4(+). Its pathway is pyrimidine metabolism; dUMP biosynthesis; dUMP from dCTP (dUTP route): step 1/2. In terms of biological role, catalyzes the deamination of dCTP to dUTP. The sequence is that of dCTP deaminase from Burkholderia thailandensis (strain ATCC 700388 / DSM 13276 / CCUG 48851 / CIP 106301 / E264).